The following is a 451-amino-acid chain: Lysine histidine transporter-like 3 (451 aa).

Over 1–40 (MKGIPSSSNQILNQDLVEDQSFELEDWLPITASRNANWYY) the chain is Cytoplasmic. Residues 41–61 (SAFHNVTAIVGAGVLGLPYAM) traverse the membrane as a helical segment. The Extracellular portion of the chain corresponds to 62–63 (SE). The helical transmembrane segment at 64 to 84 (LGWGPGVVVLILSWVITLYTF) threads the bilayer. Over 85 to 115 (WQMIEMHEMFEGKRFDRYHELGQAAFGKKLG) the chain is Cytoplasmic. Residues 116 to 136 (LYIVVPLQLLVETSACIVYMV) form a helical membrane-spanning segment. Residues 137–159 (TGGESLKKIHQLSVGDYECRKLK) lie on the Extracellular side of the membrane. Residues 160–177 (VRHFILIFASSQFVLSLL) form a helical membrane-spanning segment. The Cytoplasmic segment spans residues 178–182 (KNFNS). Residues 183-203 (ISGVSLVAAVMSMSYSTIAWV) form a helical membrane-spanning segment. Residues 204–227 (ASLTKGVANNVEYGYKRRNNTSVP) lie on the Extracellular side of the membrane. Residues 228 to 248 (LAFLGALGEMAFAYAGHNVVL) form a helical membrane-spanning segment. Over 249 to 269 (EIQATIPSTPENPSKRPMWKG) the chain is Cytoplasmic. Residues 270 to 290 (AIVAYIIVAFCYFPVALVGFW) form a helical membrane-spanning segment. Topologically, residues 291–309 (TFGNNVEENILKTLRGPKG) are extracellular. A helical membrane pass occupies residues 310–330 (LIIVANIFVIIHLMGSYQVYA). At 331 to 358 (MPVFDMIESVMIKKWHFSPTRVLRFTIR) the chain is on the cytoplasmic side. A helical membrane pass occupies residues 359–379 (WTFVAATMGIAVALPHFSALL). Position 380 (S380) is a topological domain, extracellular. The chain crosses the membrane as a helical span at residues 381–401 (FFGGFIFAPTTYFIPCIIWLI). The Cytoplasmic portion of the chain corresponds to 402-413 (LKKPKRFSLSWC). A helical membrane pass occupies residues 414-434 (INWICIILGVLVMIIAPIGGL). At 435 to 451 (AKLMNALKQPDSSCKST) the chain is on the extracellular side.

The protein belongs to the amino acid/polyamine transporter 2 family. Amino acid/auxin permease (AAAP) (TC 2.A.18.2) subfamily.

The protein localises to the cell membrane. Its function is as follows. Amino acid transporter. The protein is Lysine histidine transporter-like 3 of Arabidopsis thaliana (Mouse-ear cress).